A 510-amino-acid chain; its full sequence is Protein ERGIC-53 (510 aa).

The first 30 residues, 1–30 (MAGSRQRGLRARVRPLFCALLLSLGRFVRG), serve as a signal peptide directing secretion. The Lumenal portion of the chain corresponds to 31–477 (DGVGGDPAVA…ELPPFPSCLS (447 aa)). The L-type lectin-like domain occupies 44–267 (RRFEYKYSFK…DVLSFLTFQL (224 aa)). The a carbohydrate site is built by Ser-88 and Asp-121. Ca(2+) is bound by residues Asp-152, Phe-154, and Asn-156. A carbohydrate-binding residues include Asn-156 and His-178. Asp-181 contacts Ca(2+). Cys-190 and Cys-230 are disulfide-bonded. 251–253 (GGL) is an a carbohydrate binding site. Ser-425 carries the phosphoserine modification. Residues 478 to 498 (TVHFIIFVVVQTVLFIGYIMY) form a helical membrane-spanning segment. Over 499-510 (RSQQEAAAKKFF) the chain is Cytoplasmic. Positions 499–510 (RSQQEAAAKKFF) are mediates interaction with RAB3GAP1, RAB3GAP2 and UBXN6. Positions 509–510 (FF) match the ER export motif motif.

In terms of assembly, exists both as a covalent disulfide-linked homohexamer, and a complex of three disulfide-linked dimers non-covalently kept together. Interacts with MCFD2. May interact with TMEM115. Interacts with RAB3GAP1 and RAB3GAP2. Interacts with UBXN6. Interacts with SERPINA1/alpha1-antitrypsin. Interacts with BET1. In terms of processing, the N-terminal may be partly blocked. Ubiquitous.

The protein localises to the endoplasmic reticulum-Golgi intermediate compartment membrane. Its subcellular location is the golgi apparatus membrane. It localises to the endoplasmic reticulum membrane. Its function is as follows. Mannose-specific lectin. May recognize sugar residues of glycoproteins, glycolipids, or glycosylphosphatidyl inositol anchors and may be involved in the sorting or recycling of proteins, lipids, or both. The LMAN1-MCFD2 complex forms a specific cargo receptor for the ER-to-Golgi transport of selected proteins. The sequence is that of Protein ERGIC-53 (LMAN1) from Homo sapiens (Human).